A 133-amino-acid chain; its full sequence is Large ribosomal subunit protein eL32y (133 aa).

This sequence belongs to the eukaryotic ribosomal protein eL32 family.

This Arabidopsis thaliana (Mouse-ear cress) protein is Large ribosomal subunit protein eL32y (RPL32B).